A 286-amino-acid chain; its full sequence is Shikimate dehydrogenase (NADP(+)) (286 aa).

Shikimate-binding positions include 22–24 and threonine 71; that span reads SRS. Lysine 75 functions as the Proton acceptor in the catalytic mechanism. Glutamate 87 contacts NADP(+). 2 residues coordinate shikimate: asparagine 96 and aspartate 111. NADP(+) contacts are provided by residues 136 to 140, 160 to 165, and isoleucine 225; these read GAGGA and NRTPER. Tyrosine 227 is a binding site for shikimate. Glycine 248 contacts NADP(+).

Belongs to the shikimate dehydrogenase family. In terms of assembly, homodimer.

The enzyme catalyses shikimate + NADP(+) = 3-dehydroshikimate + NADPH + H(+). Its pathway is metabolic intermediate biosynthesis; chorismate biosynthesis; chorismate from D-erythrose 4-phosphate and phosphoenolpyruvate: step 4/7. Functionally, involved in the biosynthesis of the chorismate, which leads to the biosynthesis of aromatic amino acids. Catalyzes the reversible NADPH linked reduction of 3-dehydroshikimate (DHSA) to yield shikimate (SA). This Rhizobium meliloti (strain 1021) (Ensifer meliloti) protein is Shikimate dehydrogenase (NADP(+)).